The primary structure comprises 448 residues: Phosphoglucosamine mutase (448 aa).

The Phosphoserine intermediate role is filled by Ser100. Ser100, Asp240, Asp242, and Asp244 together coordinate Mg(2+). Ser100 carries the post-translational modification Phosphoserine.

It belongs to the phosphohexose mutase family. The cofactor is Mg(2+). In terms of processing, activated by phosphorylation.

It carries out the reaction alpha-D-glucosamine 1-phosphate = D-glucosamine 6-phosphate. Functionally, catalyzes the conversion of glucosamine-6-phosphate to glucosamine-1-phosphate. The protein is Phosphoglucosamine mutase of Clostridium perfringens (strain ATCC 13124 / DSM 756 / JCM 1290 / NCIMB 6125 / NCTC 8237 / Type A).